We begin with the raw amino-acid sequence, 935 residues long: Isoleucine--tRNA ligase (935 aa).

The short motif at 58–68 is the 'HIGH' region element; the sequence is PYANGSIHVGH. Glu558 serves as a coordination point for L-isoleucyl-5'-AMP. Positions 599-603 match the 'KMSKS' region motif; that stretch reads KMSKS. Lys602 provides a ligand contact to ATP. Positions 897, 900, 917, and 920 each coordinate Zn(2+).

It belongs to the class-I aminoacyl-tRNA synthetase family. IleS type 1 subfamily. As to quaternary structure, monomer. The cofactor is Zn(2+).

It is found in the cytoplasm. It catalyses the reaction tRNA(Ile) + L-isoleucine + ATP = L-isoleucyl-tRNA(Ile) + AMP + diphosphate. Its function is as follows. Catalyzes the attachment of isoleucine to tRNA(Ile). As IleRS can inadvertently accommodate and process structurally similar amino acids such as valine, to avoid such errors it has two additional distinct tRNA(Ile)-dependent editing activities. One activity is designated as 'pretransfer' editing and involves the hydrolysis of activated Val-AMP. The other activity is designated 'posttransfer' editing and involves deacylation of mischarged Val-tRNA(Ile). The chain is Isoleucine--tRNA ligase from Francisella philomiragia subsp. philomiragia (strain ATCC 25017 / CCUG 19701 / FSC 153 / O#319-036).